A 284-amino-acid polypeptide reads, in one-letter code: L-ribulose-5-phosphate 3-epimerase UlaE (284 aa).

It belongs to the L-ribulose-5-phosphate 3-epimerase family.

The enzyme catalyses L-ribulose 5-phosphate = L-xylulose 5-phosphate. Its pathway is cofactor degradation; L-ascorbate degradation; D-xylulose 5-phosphate from L-ascorbate: step 3/4. Catalyzes the isomerization of L-xylulose-5-phosphate to L-ribulose-5-phosphate. Is involved in the anaerobic L-ascorbate utilization. The protein is L-ribulose-5-phosphate 3-epimerase UlaE of Escherichia coli (strain 55989 / EAEC).